The sequence spans 1774 residues: Collagen alpha-1(XVIII) chain (1774 aa).

Positions 1–26 (MAPDPSRRLCLLLLLLLSCRLVPASA) are cleaved as a signal peptide. A nonhelical region 1 (NC1) region spans residues 27–785 (DGNSLSPLNP…QNPGRGLIKG (759 aa)). Disordered regions lie at residues 47 to 113 (DSLE…TPAV) and 218 to 269 (LPPF…LEGK). Composition is skewed to polar residues over residues 55-87 (KPQN…TPAS) and 244-256 (LSSS…SWGN). Residues asparagine 354 and asparagine 361 are each glycosylated (N-linked (GlcNAc...) asparagine). Positions 365 to 482 (TSTSRCLPLP…SQEDGYCVFI (118 aa)) constitute an FZ domain. 5 cysteine pairs are disulfide-bonded: cysteine 370–cysteine 433, cysteine 380–cysteine 426, cysteine 417–cysteine 455, cysteine 444–cysteine 479, and cysteine 448–cysteine 468. Residues 522-704 (GPDSNSGQVA…EDRASGDFGS (183 aa)) form the Laminin G-like domain. A glycan (N-linked (GlcNAc...) asparagine) is linked at asparagine 585. Positions 681 to 1458 (RVSPVHCLDE…PPGPPGAMGA (778 aa)) are disordered. Basic and acidic residues predominate over residues 708–717 (ESSKSHKEDT). Phosphothreonine is present on threonine 730. Residues 786–812 (GMKGQKGEPGAQGPPGPAGPQGPAGPV) are triple-helical region 1 (COL1). Positions 809–824 (AGPVVQSPNSQPVPGA) are enriched in low complexity. The tract at residues 813–822 (VQSPNSQPVP) is nonhelical region 2 (NC2). In terms of domain architecture, Collagen-like 1 spans 823–878 (GAQGPPGPQGPPGKDGTPGRDGEPGDPGEDGRPGDTGPQGFPGTPGDVGPKGEKGD). The triple-helical region 2 (COL2) stretch occupies residues 823-896 (GAQGPPGPQG…PGPPGPPGPS (74 aa)). A compositionally biased stretch (basic and acidic residues) spans 839–855 (TPGRDGEPGDPGEDGRP). A compositionally biased stretch (pro residues) spans 884–895 (RGPPGPPGPPGP). Residues 897-920 (FRQDKLTFIDMEGSGFSGDIESLR) are nonhelical region 3 (NC3). Residue serine 910 is glycosylated (O-linked (Xyl...) (chondroitin sulfate) serine). Residues 921-1042 (GPRGFPGPPG…PGPPGPPGPG (122 aa)) are triple-helical region 3 (COL3). Over residues 925 to 935 (FPGPPGPPGVP) the composition is skewed to pro residues. Asparagine 947 carries an N-linked (GlcNAc...) asparagine glycan. Low complexity predominate over residues 951-963 (APGPAGLPGVPGK). 2 consecutive Collagen-like domains span residues 953-1007 (GPAG…GSKG) and 1008-1041 (DLGP…PPGP). Composition is skewed to pro residues over residues 967-982 (PGFP…PGKE) and 1026-1041 (PVGP…PPGP). The nonhelical region 4 (NC4) stretch occupies residues 1043–1065 (FAAGFDDMEGSGIPLWTTARSSD). Collagen-like domains follow at residues 1066-1117 (GLQG…GPKG), 1118-1147 (EKGM…PPGP), 1162-1202 (PGPE…GEPG), and 1216-1264 (QKGA…EPGD). Positions 1066 to 1148 (GLQGPPGSPG…PGPPGPPGPV (83 aa)) are triple-helical region 4 (COL4). Residues 1138 to 1147 (LPGPPGPPGP) are compositionally biased toward pro residues. The interval 1149–1162 (IYVSSEDKAIVSTP) is nonhelical region 5 (NC5). A triple-helical region 5 (COL5) region spans residues 1163–1204 (GPEGKPGYAGFPGPAGPKGDLGSKGEQGLPGPKGEKGEPGTI). Positions 1205–1217 (FSPDGRALGHPQK) are nonhelical region 6 (NC6). The interval 1218 to 1290 (GAKGEPGFRG…PGPPGPPGMP (73 aa)) is triple-helical region 6 (COL6). Pro residues predominate over residues 1275–1289 (PGPPGPPGPPGPPGM). Residues 1291-1300 (IYDSNAFVES) form a nonhelical region 7 (NC7) region. Residues 1301 to 1317 (GRPGLPGQQGVQGPSGP) are compositionally biased toward low complexity. Positions 1301-1333 (GRPGLPGQQGVQGPSGPKGDKGEVGPPGPPGQF) are triple-helical region 7 (COL7). Residues 1334–1345 (PIDLFHLEAEMK) are nonhelical region 8 (NC8). Positions 1338–1362 (FHLEAEMKGDKGDRGDAGQKGERGE) are enriched in basic and acidic residues. Residues 1346 to 1369 (GDKGDRGDAGQKGERGEPGAPGGG) are triple-helical region 8 (COL8). Positions 1351 to 1353 (RGD) match the Cell attachment site motif. The segment at 1370–1376 (FFSSSVP) is nonhelical region 9 (NC9). Composition is skewed to pro residues over residues 1376-1388 (PGPP…PGIP), 1398-1407 (PPGPPGPQGP), 1418-1431 (PPGP…PSFP), and 1441-1453 (PGPP…PGPP). The triple-helical region 9 (COL9) stretch occupies residues 1377-1428 (GPPGPPGYPGIPGPKGESIRGPPGPPGPQGPPGIGYEGRQGPPGPPGPPGPP). Residues 1429 to 1441 (SFPGPHRQTVSVP) are nonhelical region 10 (NC10). A triple-helical region 10 (COL10) region spans residues 1442 to 1459 (GPPGPPGPPGPPGAMGAS). The tract at residues 1460 to 1774 (AGQVRIWATY…ENSFMTSFSK (315 aa)) is nonhelical region 11 (NC11). Residues 1474–1519 (DKIREVPEGWLIFVAEREELYVRVRNGFRKVLLEARTALPRGTGNE) are non-collagenous domain 1 association domain. The tract at residues 1520–1590 (VAALQPPLVQ…PPARPTLSLA (71 aa)) is non-collagenous domain 1 hinge region. Histidine 1591, histidine 1593, aspartate 1595, histidine 1601, and aspartate 1666 together coordinate Zn(2+). Cystine bridges form between cysteine 1623/cysteine 1763 and cysteine 1725/cysteine 1755.

It belongs to the multiplexin collagen family. In terms of assembly, forms homotrimers. Recombinant non-collagenous domain 1 has stronger affinity to NID1, HSPG2 and laminin-1:NID1 complex and lower affinity to FBLN1 and FBLN2 than endostatin. Monomeric. Interacts with KDR/VEGFR2. Interacts with the ITGA5:ITGB1 complex. Interacts with NID1, HSPG2, laminin-1:NID1 complex, FBLN1 and FBLN2. Post-translationally, prolines at the third position of the tripeptide repeating unit (G-X-Y) of the triple-helical regions are hydroxylated. Undergoes proteolytic processing by CTSL/cathepsin-L and elastase-like proteases to generate both non-collagenous domain 1 trimers and endostatin monomers. In tissue extracts (brain, skeletal muscle, heart, kidney, testis and liver) predominantly bands of approximately 38 kDa are detected; recombinant non-collagenous domain 1 shows similar mobility. In vitro, several proteolytic cleavage sites in the non-collagenous domain 1 hinge region generating different endostatin-like peptides are reported. Expressed in liver, kidney, lung, skeletal muscle and testis.

It is found in the secreted. Its subcellular location is the extracellular space. It localises to the extracellular matrix. The protein resides in the basement membrane. Its function is as follows. Probably plays a major role in determining the retinal structure as well as in the closure of the neural tube. Functionally, may regulate extracellular matrix-dependent motility and morphogenesis of endothelial and non-endothelial cells; the function requires homotrimerization and implicates MAPK signaling. In terms of biological role, potently inhibits endothelial cell proliferation and angiogenesis. May inhibit angiogenesis by binding to the heparan sulfate proteoglycans involved in growth factor signaling. Inhibits VEGFA isoform VEGF165-induced endothelial cell proliferation and migration. Seems to inhibit VEGFA-mediated signaling by blocking the interaction of VEGFA to its receptor KDR/VEGFR2. Modulates endothelial cell migration in an integrin-dependent manner implicating integrin ITGA5:ITGB1 and to a lesser extent ITGAV:ITGB3 and ITGAV:ITGB5. May negatively regulate the activity of homotrimeric non-collagenous domain 1. This chain is Collagen alpha-1(XVIII) chain, found in Mus musculus (Mouse).